Consider the following 75-residue polypeptide: UPF0346 protein LGAS_0911 (75 aa).

It belongs to the UPF0346 family.

The chain is UPF0346 protein LGAS_0911 from Lactobacillus gasseri (strain ATCC 33323 / DSM 20243 / BCRC 14619 / CIP 102991 / JCM 1131 / KCTC 3163 / NCIMB 11718 / NCTC 13722 / AM63).